Here is a 104-residue protein sequence, read N- to C-terminus: Iron-sulfur cluster assembly protein CyaY (104 aa).

The protein belongs to the frataxin family.

In terms of biological role, involved in iron-sulfur (Fe-S) cluster assembly. May act as a regulator of Fe-S biogenesis. The polypeptide is Iron-sulfur cluster assembly protein CyaY (Rickettsia prowazekii (strain Madrid E)).